We begin with the raw amino-acid sequence, 151 residues long: Ribosome maturation factor RimP (151 aa).

Belongs to the RimP family.

The protein resides in the cytoplasm. Its function is as follows. Required for maturation of 30S ribosomal subunits. In Shewanella oneidensis (strain ATCC 700550 / JCM 31522 / CIP 106686 / LMG 19005 / NCIMB 14063 / MR-1), this protein is Ribosome maturation factor RimP.